Here is a 243-residue protein sequence, read N- to C-terminus: uncharacterized protein (243 aa).

This is an uncharacterized protein from Methanocaldococcus jannaschii (strain ATCC 43067 / DSM 2661 / JAL-1 / JCM 10045 / NBRC 100440) (Methanococcus jannaschii).